The sequence spans 435 residues: Glutamate-1-semialdehyde 2,1-aminomutase (435 aa).

The residue at position 266 (K266) is an N6-(pyridoxal phosphate)lysine.

It belongs to the class-III pyridoxal-phosphate-dependent aminotransferase family. HemL subfamily. In terms of assembly, homodimer. Requires pyridoxal 5'-phosphate as cofactor.

The protein resides in the cytoplasm. The enzyme catalyses (S)-4-amino-5-oxopentanoate = 5-aminolevulinate. It functions in the pathway porphyrin-containing compound metabolism; protoporphyrin-IX biosynthesis; 5-aminolevulinate from L-glutamyl-tRNA(Glu): step 2/2. This chain is Glutamate-1-semialdehyde 2,1-aminomutase, found in Coxiella burnetii (strain Dugway 5J108-111).